Here is a 190-residue protein sequence, read N- to C-terminus: Lysozyme g (190 aa).

Residues 1 to 10 show a composition bias toward basic and acidic residues; sequence MPYGKIEDIK. The tract at residues 1 to 31 is disordered; the sequence is MPYGKIEDIKTSGASDVTAAQDGLKEGGWKS. Active-site residues include E71 and D84.

The protein belongs to the glycosyl hydrolase 23 family.

It carries out the reaction Hydrolysis of (1-&gt;4)-beta-linkages between N-acetylmuramic acid and N-acetyl-D-glucosamine residues in a peptidoglycan and between N-acetyl-D-glucosamine residues in chitodextrins.. This chain is Lysozyme g, found in Takifugu rubripes (Japanese pufferfish).